Consider the following 106-residue polypeptide: Nucleoid-associated protein Abu_0429 (106 aa).

This sequence belongs to the YbaB/EbfC family. As to quaternary structure, homodimer.

The protein resides in the cytoplasm. The protein localises to the nucleoid. In terms of biological role, binds to DNA and alters its conformation. May be involved in regulation of gene expression, nucleoid organization and DNA protection. This chain is Nucleoid-associated protein Abu_0429, found in Aliarcobacter butzleri (strain RM4018) (Arcobacter butzleri).